Here is a 348-residue protein sequence, read N- to C-terminus: tRNA N6-adenosine threonylcarbamoyltransferase (348 aa).

Fe cation contacts are provided by histidine 111 and histidine 115. Substrate contacts are provided by residues 134–138, aspartate 167, glycine 180, aspartate 184, and asparagine 279; that span reads LVSGG. Aspartate 307 lines the Fe cation pocket.

This sequence belongs to the KAE1 / TsaD family. It depends on Fe(2+) as a cofactor.

Its subcellular location is the cytoplasm. The catalysed reaction is L-threonylcarbamoyladenylate + adenosine(37) in tRNA = N(6)-L-threonylcarbamoyladenosine(37) in tRNA + AMP + H(+). Functionally, required for the formation of a threonylcarbamoyl group on adenosine at position 37 (t(6)A37) in tRNAs that read codons beginning with adenine. Is involved in the transfer of the threonylcarbamoyl moiety of threonylcarbamoyl-AMP (TC-AMP) to the N6 group of A37, together with TsaE and TsaB. TsaD likely plays a direct catalytic role in this reaction. The chain is tRNA N6-adenosine threonylcarbamoyltransferase from Synechocystis sp. (strain ATCC 27184 / PCC 6803 / Kazusa).